A 550-amino-acid polypeptide reads, in one-letter code: Chaperonin GroEL (550 aa).

ATP-binding positions include 30–33, lysine 51, 87–91, glycine 415, 481–483, and aspartate 497; these read TLGP, DGTTT, and NAA.

Belongs to the chaperonin (HSP60) family. As to quaternary structure, forms a cylinder of 14 subunits composed of two heptameric rings stacked back-to-back. Interacts with the co-chaperonin GroES.

It is found in the cytoplasm. The enzyme catalyses ATP + H2O + a folded polypeptide = ADP + phosphate + an unfolded polypeptide.. Its function is as follows. Together with its co-chaperonin GroES, plays an essential role in assisting protein folding. The GroEL-GroES system forms a nano-cage that allows encapsulation of the non-native substrate proteins and provides a physical environment optimized to promote and accelerate protein folding. The polypeptide is Chaperonin GroEL (Photobacterium profundum (strain SS9)).